We begin with the raw amino-acid sequence, 556 residues long: Formate--tetrahydrofolate ligase (556 aa).

Residue Thr-65 to Thr-72 participates in ATP binding.

It belongs to the formate--tetrahydrofolate ligase family.

The catalysed reaction is (6S)-5,6,7,8-tetrahydrofolate + formate + ATP = (6R)-10-formyltetrahydrofolate + ADP + phosphate. It functions in the pathway one-carbon metabolism; tetrahydrofolate interconversion. This Ruminiclostridium cellulolyticum (strain ATCC 35319 / DSM 5812 / JCM 6584 / H10) (Clostridium cellulolyticum) protein is Formate--tetrahydrofolate ligase.